The chain runs to 158 residues: uncharacterized protein (158 aa).

This is an uncharacterized protein from Caenorhabditis elegans.